The following is a 230-amino-acid chain: N-(5'-phosphoribosyl)anthranilate isomerase (230 aa).

The protein belongs to the TrpF family.

The enzyme catalyses N-(5-phospho-beta-D-ribosyl)anthranilate = 1-(2-carboxyphenylamino)-1-deoxy-D-ribulose 5-phosphate. It participates in amino-acid biosynthesis; L-tryptophan biosynthesis; L-tryptophan from chorismate: step 3/5. The sequence is that of N-(5'-phosphoribosyl)anthranilate isomerase from Thermosynechococcus vestitus (strain NIES-2133 / IAM M-273 / BP-1).